The chain runs to 546 residues: ATP synthase subunit alpha (546 aa).

173–180 (GDRQTGKT) lines the ATP pocket. Residues 520–546 (VDKKTAPKSVTPVDQEQIKAGKAQEKK) are disordered. Over residues 535 to 546 (EQIKAGKAQEKK) the composition is skewed to basic and acidic residues.

Belongs to the ATPase alpha/beta chains family. In terms of assembly, F-type ATPases have 2 components, CF(1) - the catalytic core - and CF(0) - the membrane proton channel. CF(1) has five subunits: alpha(3), beta(3), gamma(1), delta(1), epsilon(1). CF(0) has three main subunits: a(1), b(2) and c(9-12). The alpha and beta chains form an alternating ring which encloses part of the gamma chain. CF(1) is attached to CF(0) by a central stalk formed by the gamma and epsilon chains, while a peripheral stalk is formed by the delta and b chains.

The protein localises to the cell membrane. The enzyme catalyses ATP + H2O + 4 H(+)(in) = ADP + phosphate + 5 H(+)(out). Produces ATP from ADP in the presence of a proton gradient across the membrane. The alpha chain is a regulatory subunit. The chain is ATP synthase subunit alpha from Bifidobacterium animalis subsp. lactis (strain AD011).